The sequence spans 4244 residues: Tenascin-X (4244 aa).

The signal sequence occupies residues 1-23 (MMPAQYALTSSLVLLVLLSTARA). The segment at 27-57 (SSRSNVTLPAPRPPPQPGGHTVGAGVGSPSS) is disordered. Asn31 carries N-linked (GlcNAc...) asparagine glycosylation. The region spanning 156–168 (CSCEPGWGGPTCS) is the EGF-like 1; incomplete domain. Residues 169–189 (DPTDAEIPPSSPPSASGSCPD) are disordered. EGF-like domains follow at residues 183–213 (ASGS…GPSC), 214–244 (GWPS…GPDC), 245–275 (SQRS…GDDC), 276–306 (GMRS…GEDC), 307–337 (GVRS…GEDC), 338–368 (GTRS…GEDC), 369–399 (STRT…GDDC), 400–430 (GVRS…GTDC), 431–461 (GSRA…GEDC), 462–492 (GVRS…GRDC), 493–523 (GTRA…GEDC), 524–554 (GSRR…GEDC), 555–585 (STRS…GEDC), 586–616 (GVRQ…SEDC), 617–647 (SIRT…GPTC), 648–679 (ATRM…EDCG), 684–714 (PASA…GPDC), and 715–746 (AIQT…EDCG). Disulfide bonds link Cys187–Cys197, Cys191–Cys202, Cys204–Cys213, Cys218–Cys228, Cys222–Cys233, Cys235–Cys244, Cys249–Cys259, Cys253–Cys264, Cys266–Cys275, Cys280–Cys290, Cys284–Cys295, Cys297–Cys306, Cys311–Cys321, Cys315–Cys326, Cys328–Cys337, Cys342–Cys352, Cys346–Cys357, Cys359–Cys368, Cys373–Cys383, Cys377–Cys388, Cys390–Cys399, Cys404–Cys414, Cys408–Cys419, Cys421–Cys430, Cys435–Cys445, Cys439–Cys450, Cys452–Cys461, Cys466–Cys476, Cys470–Cys481, Cys483–Cys492, Cys497–Cys507, Cys501–Cys512, Cys514–Cys523, Cys528–Cys538, Cys532–Cys543, Cys545–Cys554, Cys559–Cys569, Cys563–Cys574, Cys576–Cys585, Cys590–Cys600, Cys594–Cys605, Cys607–Cys616, Cys621–Cys631, Cys625–Cys636, Cys638–Cys647, Cys652–Cys662, Cys656–Cys667, Cys669–Cys678, Cys688–Cys698, Cys692–Cys703, Cys705–Cys714, Cys719–Cys729, Cys723–Cys734, and Cys736–Cys745. The disordered stretch occupies residues 926-956 (TGSSPLGLLGTTDEPPPSGPSTTQGAQAPLL). 10 consecutive Fibronectin type-III domains span residues 959 to 1051 (RPQE…IMDK), 1064 to 1153 (RLGE…PQSD), 1161 to 1249 (HLGN…APER), 1263 to 1352 (LLGE…PQED), 1374 to 1468 (LLGE…TPPA), 1476 to 1572 (RLGE…TEAS), 1574 to 1669 (PPLE…RGDA), 1674 to 1764 (PPRL…ARSA), 1778 to 1868 (LGEE…REET), and 1883 to 1971 (HLGE…VPEE). Residues 1340 to 1372 (PESVVAKTAPQEDVDETPSPTELGTEAPESPEE) are disordered. Residues 1666–1668 (RGD) carry the Cell attachment site motif. The segment at 1752–1777 (PLTADGTTEARSAMDDTGTKRPPKPR) is disordered. Residues 1968–1990 (VPEEEKPSEPPTATPEPPIKPRL) are disordered. A compositionally biased stretch (pro residues) spans 1976–1987 (EPPTATPEPPIK). 5 consecutive Fibronectin type-III domains span residues 1989-2089 (RLGE…SMEA), 2097-2185 (LLGE…APEE), 2196-2296 (RLGQ…TEPP), 2305-2398 (RLEE…TPSP), and 2408-2502 (PPEE…PQED). The segment at 2281–2304 (APGKDEEMAPASTEPPTPEPPIKP) is disordered. The interval 2495–2542 (GVTAPQEDVDETPSPTEPGTEAPGPPEEPLLGELTVTGSSPDSLSLSW) is disordered. The span at 2506–2516 (TPSPTEPGTEA) shows a compositional bias: low complexity. Fibronectin type-III domains lie at 2519–2617 (PPEE…TTQA), 2625–2723 (PPIK…TPSP), 2733–2840 (PPEE…TTPE), 2841–2939 (PPNK…TPAP), 2949–3042 (PPEE…APKD), 3062–3153 (RLGE…TPSP), 3168–3260 (LLGE…TPLP), 3264–3355 (RLGE…TKPS), 3357–3446 (RLGE…PLEK), 3451–3544 (HLGE…TPAP), 3553–3647 (PPEE…LAPA), 3657–3754 (RLSQ…TLSP), 3758–3847 (SPRD…VPDG), 3848–3934 (PTQL…TGLE), and 3935–4025 (APRD…LRIP). Over residues 2530–2542 (VTGSSPDSLSLSW) the composition is skewed to polar residues. Disordered regions lie at residues 2824–2847 (PEDE…KPRL) and 2933–2969 (EEET…DSLS). Positions 2937–2946 (PAPTEPSTEA) are enriched in low complexity. Polar residues predominate over residues 2960–2969 (VTGSSPDSLS). Disordered regions lie at residues 3536–3559 (APEE…EPRL) and 3636–3662 (LSAE…SQLS). N-linked (GlcNAc...) asparagine glycans are attached at residues Asn3855, Asn3908, and Asn3920. Residues 4021 to 4236 (GLRIPFPRDC…FTEMKLRPRN (216 aa)) form the Fibrinogen C-terminal domain. Residues Cys4030 and Cys4060 are joined by a disulfide bond. Asn4095 carries N-linked (GlcNAc...) asparagine glycosylation. An intrachain disulfide couples Cys4182 to Cys4195.

This sequence belongs to the tenascin family. As to quaternary structure, homotrimer. Interacts with type I, III and V collagens and tropoelastin via its 29th fibronectin type-III domain. As to expression, highly expressed in fetal adrenal, in fetal testis, fetal smooth, striated and cardiac muscle. Isoform XB-short is only expressed in the adrenal gland.

The protein resides in the secreted. The protein localises to the extracellular space. Its subcellular location is the extracellular matrix. In terms of biological role, appears to mediate interactions between cells and the extracellular matrix. Substrate-adhesion molecule that appears to inhibit cell migration. Accelerates collagen fibril formation. May play a role in supporting the growth of epithelial tumors. This Homo sapiens (Human) protein is Tenascin-X.